A 136-amino-acid polypeptide reads, in one-letter code: MVLLESEQFLTELTRLFQKCRTSGSVYITLKKYDGRTKPIPKKGTVEGFEPADNKCLLRATDGKKKISTVVSSKEVNKFQMAYSNLLRANMDGLKKRDKKNKTKKTKAAAAAAAAAPAAAATAATTAATTAATAAQ.

Residue Y27 is modified to Phosphotyrosine.

This sequence belongs to the SRP14 family. Heterodimer with SRP9; binds RNA as heterodimer. Component of a signal recognition particle (SRP) complex that consists of a 7SL RNA molecule of 300 nucleotides and six protein subunits: SRP72, SRP68, SRP54, SRP19, SRP14 and SRP9.

It localises to the cytoplasm. In terms of biological role, component of the signal recognition particle (SRP) complex, a ribonucleoprotein complex that mediates the cotranslational targeting of secretory and membrane proteins to the endoplasmic reticulum (ER). SRP9 together with SRP14 and the Alu portion of the SRP RNA, constitutes the elongation arrest domain of SRP. The complex of SRP9 and SRP14 is required for SRP RNA binding. The sequence is that of Signal recognition particle 14 kDa protein (SRP14) from Pongo abelii (Sumatran orangutan).